Consider the following 352-residue polypeptide: Minor capsid protein VP2 (352 aa).

Residue G2 is the site of N-myristoyl glycine; by host attachment. Residues 273–308 (SGEFIEKFEAPGGANQRTAPQWMLPLLLGLYGSVTS) form a D1 region. A helical transmembrane segment spans residues 290-310 (TAPQWMLPLLLGLYGSVTSAL). A disordered region spans residues 313–352 (YEDGPNKKKRKLSRGSSQKTKGTSASAKARHKRRNRSSRS). A DNA-binding region spans residues 313–352 (YEDGPNKKKRKLSRGSSQKTKGTSASAKARHKRRNRSSRS). The Nuclear localization signal motif lies at 316–324 (GPNKKKRKL). Residues 326 to 338 (RGSSQKTKGTSAS) show a composition bias toward polar residues. Residues 340–352 (KARHKRRNRSSRS) show a composition bias toward basic residues.

It belongs to the polyomaviruses capsid protein VP2 family. Forms homooligomers, and heterooligomers with VP3 in the endoplasmic reticulum membrane. Interacts (via D1 domain) with VP1. As to quaternary structure, interacts (via D1 domain) with VP1. Interacts (via C-terminus) with host SP1, this is probably also the case for VP2; this interaction represses SP1 activation of the SV40 early promoter and participates in virion assembly. Interacts (via nuclear localization signal) with host importin alpha2-beta heterodimer. In terms of assembly, oligomerizes with VP3 in the nucleus.

The protein resides in the virion. It is found in the host nucleus. It localises to the host endoplasmic reticulum. Its subcellular location is the host endoplasmic reticulum membrane. Its function is as follows. Structural protein that resides within the core of the capsid surrounded by 72 VP1 pentamers. Following virus endocytosis and trafficking to the endoplasmic reticulum, VP2 and VP3 form oligomers and integrate into the endoplasmic reticulum membrane. Heterooligomer VP2-VP3 may create a viroporin for transporting the viral genome across the endoplasmic reticulum membrane to the cytoplasm. Nuclear entry of the viral DNA involves the selective exposure and importin recognition of VP2 or VP3 nuclear localization signal (shared C-terminus). Plays a role in virion assembly within the nucleus in particular through a DNA-binding domain located in the C-terminal region. An N-terminal myristoylation suggests a scaffold function for virion assembly. The viral progenies exit the cells by lytic release. Isoform VP2 may repress SP1 activation of the SV40 early promoter, via specific protein-protein and protein-DNA interactions. In terms of biological role, structural protein that resides within the core of the capsid surrounded by 72 VP1 pentamers. Following virus entry, VP2 and VP3 form oligomers and integrate into the endoplasmic reticulum membrane. Heterooligomer VP2-VP3 may create a viroporin for transporting the viral genome across the endoplasmic reticulum membrane. Essential for focus formation and virus endoplasmic reticulum-to-cytosol membrane transport, required to recruit selective cellular components to the foci in the ER membrane. Nuclear entry of the viral DNA involves the selective exposure and importin recognition of VP2 or VP3 nuclear localization signal (shared C-terminus). Isoform VP3 represses SP1 activation of the SV40 early promoter, via specific protein-protein and protein-DNA interactions. SP1 additionally participates in recruiting VP3 to the SV40 minichromosome during SV40 assembly. Plays a role in virion assembly within the nucleus. May initiate host cell lysis when associated with VP4. Viroporin inducing perforation of cellular membranes to trigger virus progeny release. Forms pores of 3 nm inner diameter. VP4 is expressed about 24 hours after the late structural proteins and is not incorporated into the mature virion. This Simian virus 40 (SV40) protein is Minor capsid protein VP2.